The following is a 220-amino-acid chain: UPF0319 protein YccT (220 aa).

Positions 1 to 20 (MKTGIVTTLIALCLPVSVFA) are cleaved as a signal peptide.

The protein belongs to the UPF0319 family.

The polypeptide is UPF0319 protein YccT (Escherichia coli O139:H28 (strain E24377A / ETEC)).